The following is a 475-amino-acid chain: MQIQANTVGTQAVAHHSDATTGVGRMGQMEARQVATGQDAILLGSRSEPQKGQGLLSRLGAQLARPFVAIKEWISNLLGTDKRAAAPKAQTAVSPEDLQRLMKQAAFGSSLGGFAKADVLNNITGEQLGKDHASLATGNGPLRSLCTALQAVVIGSQQPQLRELATGLLARPIAGIPLQQWGSVGGKVTELLTSAPPELLKEAMSQLHTAMGEVADLQRAVKAEVAGEPARSATTAAAVAPLQSGESEVNVEPADKALAEGLQEQFGLEAEQYLGEQPHGTYSDAEVMALGLYTNGEYQHLNRSLRQEKQLDAGQALIDQGMSTAFEKSTPTEQLIKTFRGTHGGDAFNEVAEGQVGHDVAYLSTSRDPKVATNFGGSGSISTIFGRSGIDVSDISVEGDEQEILYNKETDMRVLLSAKDERGVTRRVLEEASLGEQSGHSKGLLDGLDLARGAGGADKPQEQDIRLKMRGLDLA.

One can recognise a Bacterial Rho-GAP domain in the interval 93 to 226; that stretch reads VSPEDLQRLM…LQRAVKAEVA (134 aa). A TR mART core domain is found at 260-436; that stretch reads EGLQEQFGLE…RVLEEASLGE (177 aa). Catalysis depends on residues Arg-340, Ser-364, and Glu-403.

It is found in the secreted. In terms of biological role, directly involved in the toxicity for RTG-2 (rainbow trout gonad) fish cells. In Aeromonas salmonicida, this protein is ADP-ribosyltransferase toxin AexT (aexT).